A 270-amino-acid chain; its full sequence is Oxidoreductase NAD-binding domain-containing protein 1 (270 aa).

An FAD-binding FR-type domain is found at 20–123 (MELFSARVCD…VGGNFYFDPQ (104 aa)). 137 to 142 (GVGINP) provides a ligand contact to NAD(+).

The polypeptide is Oxidoreductase NAD-binding domain-containing protein 1 (oxnad1) (Danio rerio (Zebrafish)).